We begin with the raw amino-acid sequence, 387 residues long: Succinate--CoA ligase [ADP-forming] subunit beta (387 aa).

The ATP-grasp domain maps to 9–236 (RDLFESYGVP…AAAADPLEAK (228 aa)). ATP is bound by residues Lys-45, 52–54 (GRG), Ala-94, and Glu-99. Mg(2+) contacts are provided by Asn-191 and Asp-205. Residues Asn-256 and 318-320 (GIT) contribute to the substrate site.

Belongs to the succinate/malate CoA ligase beta subunit family. As to quaternary structure, heterotetramer of two alpha and two beta subunits. Mg(2+) serves as cofactor.

The catalysed reaction is succinate + ATP + CoA = succinyl-CoA + ADP + phosphate. It carries out the reaction GTP + succinate + CoA = succinyl-CoA + GDP + phosphate. Its pathway is carbohydrate metabolism; tricarboxylic acid cycle; succinate from succinyl-CoA (ligase route): step 1/1. Functionally, succinyl-CoA synthetase functions in the citric acid cycle (TCA), coupling the hydrolysis of succinyl-CoA to the synthesis of either ATP or GTP and thus represents the only step of substrate-level phosphorylation in the TCA. The beta subunit provides nucleotide specificity of the enzyme and binds the substrate succinate, while the binding sites for coenzyme A and phosphate are found in the alpha subunit. This chain is Succinate--CoA ligase [ADP-forming] subunit beta, found in Clavibacter michiganensis subsp. michiganensis (strain NCPPB 382).